The primary structure comprises 465 residues: Cysteine--tRNA ligase (465 aa).

Residue C29 coordinates Zn(2+). The short motif at 31-41 (PTVYNYIHIGN) is the 'HIGH' region element. Positions 209, 234, and 238 each coordinate Zn(2+). Positions 266–270 (KMSKS) match the 'KMSKS' region motif. ATP is bound at residue K269. The residue at position 270 (S270) is a Phosphoserine.

This sequence belongs to the class-I aminoacyl-tRNA synthetase family. Monomer. Requires Zn(2+) as cofactor.

The protein resides in the cytoplasm. The enzyme catalyses tRNA(Cys) + L-cysteine + ATP = L-cysteinyl-tRNA(Cys) + AMP + diphosphate. The chain is Cysteine--tRNA ligase from Bacillus cytotoxicus (strain DSM 22905 / CIP 110041 / 391-98 / NVH 391-98).